The sequence spans 383 residues: Lipid-A-disaccharide synthase (383 aa).

Belongs to the LpxB family.

It catalyses the reaction a lipid X + a UDP-2-N,3-O-bis[(3R)-3-hydroxyacyl]-alpha-D-glucosamine = a lipid A disaccharide + UDP + H(+). The protein operates within bacterial outer membrane biogenesis; LPS lipid A biosynthesis. Its function is as follows. Condensation of UDP-2,3-diacylglucosamine and 2,3-diacylglucosamine-1-phosphate to form lipid A disaccharide, a precursor of lipid A, a phosphorylated glycolipid that anchors the lipopolysaccharide to the outer membrane of the cell. In Aliivibrio fischeri (strain MJ11) (Vibrio fischeri), this protein is Lipid-A-disaccharide synthase.